A 202-amino-acid polypeptide reads, in one-letter code: FMN-dependent NADH:quinone oxidoreductase 2 (202 aa).

FMN-binding positions include Ser9, 15–17 (SAS), and 95–98 (MWNL).

This sequence belongs to the azoreductase type 1 family. In terms of assembly, homodimer. FMN is required as a cofactor.

The enzyme catalyses 2 a quinone + NADH + H(+) = 2 a 1,4-benzosemiquinone + NAD(+). The catalysed reaction is N,N-dimethyl-1,4-phenylenediamine + anthranilate + 2 NAD(+) = 2-(4-dimethylaminophenyl)diazenylbenzoate + 2 NADH + 2 H(+). Its function is as follows. Quinone reductase that provides resistance to thiol-specific stress caused by electrophilic quinones. Also exhibits azoreductase activity. Catalyzes the reductive cleavage of the azo bond in aromatic azo compounds to the corresponding amines. The chain is FMN-dependent NADH:quinone oxidoreductase 2 from Hahella chejuensis (strain KCTC 2396).